Consider the following 301-residue polypeptide: Sulfate adenylyltransferase subunit 2 (301 aa).

The protein belongs to the PAPS reductase family. CysD subfamily. In terms of assembly, heterodimer composed of CysD, the smaller subunit, and CysN.

The catalysed reaction is sulfate + ATP + H(+) = adenosine 5'-phosphosulfate + diphosphate. It participates in sulfur metabolism; hydrogen sulfide biosynthesis; sulfite from sulfate: step 1/3. Functionally, with CysN forms the ATP sulfurylase (ATPS) that catalyzes the adenylation of sulfate producing adenosine 5'-phosphosulfate (APS) and diphosphate, the first enzymatic step in sulfur assimilation pathway. APS synthesis involves the formation of a high-energy phosphoric-sulfuric acid anhydride bond driven by GTP hydrolysis by CysN coupled to ATP hydrolysis by CysD. The sequence is that of Sulfate adenylyltransferase subunit 2 from Shewanella woodyi (strain ATCC 51908 / MS32).